The sequence spans 252 residues: tRNA pseudouridine synthase A (252 aa).

The active-site Nucleophile is Asp-51. Position 105 (Tyr-105) interacts with substrate.

It belongs to the tRNA pseudouridine synthase TruA family.

The catalysed reaction is uridine(38/39/40) in tRNA = pseudouridine(38/39/40) in tRNA. Its function is as follows. Formation of pseudouridine at positions 38, 39 and 40 in the anticodon stem and loop of transfer RNAs. This is tRNA pseudouridine synthase A from Thermoplasma acidophilum (strain ATCC 25905 / DSM 1728 / JCM 9062 / NBRC 15155 / AMRC-C165).